Consider the following 451-residue polypeptide: uncharacterized protein (451 aa).

5 helical membrane-spanning segments follow: residues valine 11–leucine 31, isoleucine 56–threonine 76, isoleucine 151–leucine 171, phenylalanine 175–phenylalanine 195, and valine 207–isoleucine 227. The segment at threonine 250 to threonine 300 is disordered. Low complexity-rich tracts occupy residues asparagine 253–asparagine 262 and serine 280–threonine 300. A run of 2 helical transmembrane segments spans residues phenylalanine 392–serine 412 and leucine 413–leucine 433.

Its subcellular location is the membrane. This is an uncharacterized protein from Dictyostelium discoideum (Social amoeba).